We begin with the raw amino-acid sequence, 463 residues long: Chromosomal replication initiator protein DnaA (463 aa).

Residues 1 to 83 form a domain I, interacts with DnaA modulators region; the sequence is MSTNQIILTD…LQLFQHYNNT (83 aa). Residues 83 to 124 form a domain II region; the sequence is TIKSIEIITKELPGTTQTVTELPTKTFADIGSSELNSENIFS. Residues 125–343 are domain III, AAA+ region; the sequence is TLDVRFTFDN…GALNKVIAHS (219 aa). ATP-binding residues include glycine 171, glycine 173, lysine 174, and threonine 175. The segment at 344–463 is domain IV, binds dsDNA; the sequence is NFTLKEITLE…IHLLMKILQN (120 aa).

It belongs to the DnaA family. As to quaternary structure, oligomerizes as a right-handed, spiral filament on DNA at oriC.

The protein resides in the cytoplasm. Plays an essential role in the initiation and regulation of chromosomal replication. ATP-DnaA binds to the origin of replication (oriC) to initiate formation of the DNA replication initiation complex once per cell cycle. Binds the DnaA box (a 9 base pair repeat at the origin) and separates the double-stranded (ds)DNA. Forms a right-handed helical filament on oriC DNA; dsDNA binds to the exterior of the filament while single-stranded (ss)DNA is stabiized in the filament's interior. The ATP-DnaA-oriC complex binds and stabilizes one strand of the AT-rich DNA unwinding element (DUE), permitting loading of DNA polymerase. After initiation quickly degrades to an ADP-DnaA complex that is not apt for DNA replication. Binds acidic phospholipids. The chain is Chromosomal replication initiator protein DnaA from Rickettsia africae (strain ESF-5).